The sequence spans 678 residues: ABC transporter F family member 2 (678 aa).

2 ABC transporter domains span residues 84 to 342 and 411 to 626; these read VRLE…EAQY and VTVK…AREL. ATP contacts are provided by residues 116-123 and 443-450; these read GVNGAGKT and GPNGCGKS. The tract at residues 630-678 is disordered; that stretch reads AELEEKAPKVKAKSKMSKAEREARKKQKMKAFQASKKKSKSSKNAKRWN. Residues 653 to 678 are compositionally biased toward basic residues; that stretch reads RKKQKMKAFQASKKKSKSSKNAKRWN.

The protein belongs to the ABC transporter superfamily. ABCF family. EF3 (TC 3.A.1.121) subfamily.

The protein is ABC transporter F family member 2 (ABCF2) of Arabidopsis thaliana (Mouse-ear cress).